Reading from the N-terminus, the 457-residue chain is Cysteine--tRNA ligase (457 aa).

Residue C30 coordinates Zn(2+). Residues 32-42 (PTVYDRAHLGN) carry the 'HIGH' region motif. The Zn(2+) site is built by C213, H238, and E242. The 'KMSKS' region motif lies at 271–275 (KMSKS). K274 lines the ATP pocket.

The protein belongs to the class-I aminoacyl-tRNA synthetase family. Monomer. Zn(2+) serves as cofactor.

The protein localises to the cytoplasm. The enzyme catalyses tRNA(Cys) + L-cysteine + ATP = L-cysteinyl-tRNA(Cys) + AMP + diphosphate. This Ruegeria sp. (strain TM1040) (Silicibacter sp.) protein is Cysteine--tRNA ligase.